The following is a 279-amino-acid chain: MKTKLDFFKMKEQNEPIVMLTAYDYPSAKQAEKAEVDMILVGDSLGMVVLGLDSTIQVTIDDMIHHTKAVKRGAKDTFIVTDMPFMSYHYSLAETLKNAARIMQESGADALKLEGGDGVFESIQALTRGGIPVVSHLGLTPQSVGVLGGYKVQGKDHESAQKLIEDSLKCEEAGAIALVLECVPGELTKRITDMLKIPVIGIGAGAEADGQVLVYHDVVGYGVSRTPKFVKQYAQIDTLLEEALIQYTKEVKAHTFPEDKHTFHIKEEVLDGLYGGIKK.

Residues D43 and D82 each contribute to the Mg(2+) site. 3-methyl-2-oxobutanoate-binding positions include D43–S44, D82, and K112. Residue E114 coordinates Mg(2+). Residue E181 is the Proton acceptor of the active site.

It belongs to the PanB family. Homodecamer; pentamer of dimers. Mg(2+) is required as a cofactor.

It localises to the cytoplasm. It carries out the reaction 3-methyl-2-oxobutanoate + (6R)-5,10-methylene-5,6,7,8-tetrahydrofolate + H2O = 2-dehydropantoate + (6S)-5,6,7,8-tetrahydrofolate. It functions in the pathway cofactor biosynthesis; (R)-pantothenate biosynthesis; (R)-pantoate from 3-methyl-2-oxobutanoate: step 1/2. Functionally, catalyzes the reversible reaction in which hydroxymethyl group from 5,10-methylenetetrahydrofolate is transferred onto alpha-ketoisovalerate to form ketopantoate. The protein is 3-methyl-2-oxobutanoate hydroxymethyltransferase of Bacillus pumilus (strain SAFR-032).